The following is a 282-amino-acid chain: Small ribosomal subunit protein uS2 (282 aa).

The disordered stretch occupies residues 245–265 (AEEAVEELPLPTGEAQDEASS).

The protein belongs to the universal ribosomal protein uS2 family.

The polypeptide is Small ribosomal subunit protein uS2 (Chlamydia trachomatis serovar A (strain ATCC VR-571B / DSM 19440 / HAR-13)).